The following is a 79-amino-acid chain: CDC42 small effector protein 1 (79 aa).

S-palmitoyl cysteine attachment occurs at residues Cys-10 and Cys-11. One can recognise a CRIB domain in the interval Ile-30–Gly-43. A disordered region spans residues His-41–Leu-79. Positions Met-63–Gln-72 are enriched in basic and acidic residues.

It belongs to the CDC42SE/SPEC family.

The protein resides in the cytoplasm. It is found in the cytoskeleton. It localises to the cell membrane. Probably involved in the organization of the actin cytoskeleton by acting downstream of CDC42, inducing actin filament assembly. The protein is CDC42 small effector protein 1 (cdc42se1) of Xenopus tropicalis (Western clawed frog).